The primary structure comprises 463 residues: Asparagine--tRNA ligase (463 aa).

Belongs to the class-II aminoacyl-tRNA synthetase family. As to quaternary structure, homodimer.

Its subcellular location is the cytoplasm. The enzyme catalyses tRNA(Asn) + L-asparagine + ATP = L-asparaginyl-tRNA(Asn) + AMP + diphosphate + H(+). The chain is Asparagine--tRNA ligase from Alkaliphilus metalliredigens (strain QYMF).